Reading from the N-terminus, the 444-residue chain is MSRLFGTDGVRGLANADLTPELALSVASAAARVLYERDDSRRRVALVGRDPRASGEMLEAAVTAGLTSAGADVLRVGVLPTPAVAHLVSAMRADLGVMISASHNPMPDNGIKLFAAGGHKLPDAVEDEIADRLDERVDRPTGAAVGRARDVPDAGSRYVDHLLEATPQPLDGLRVVVDCANGAAAAVAPSAYRLAGAEVIALNAEPDGLNINEGVGSTHLDGLRAAVREHRADLGLAHDGDADRCLAVDATGSVVDGDQIMAILAVAMKEAGELADDTLVTTVMSNLGLHLAMREHGVKLRTTAVGDRYVLAELREGGFSLGGEQSGHVVLPDHATTGDGLLTALRLMGRVVETGRSLAELAATMTRLPQVLVNVRVADKATACGAPEVAKAVAEAEAELGDEGRVLLRPSGTEQLVRVMVEARSEGTAQRVAGRLAELVAAIR.

The active-site Phosphoserine intermediate is the Ser-102. Mg(2+)-binding residues include Ser-102, Asp-239, Asp-241, and Asp-243. Phosphoserine is present on Ser-102.

Belongs to the phosphohexose mutase family. Requires Mg(2+) as cofactor. Activated by phosphorylation.

The enzyme catalyses alpha-D-glucosamine 1-phosphate = D-glucosamine 6-phosphate. Its function is as follows. Catalyzes the conversion of glucosamine-6-phosphate to glucosamine-1-phosphate. This chain is Phosphoglucosamine mutase, found in Saccharopolyspora erythraea (strain ATCC 11635 / DSM 40517 / JCM 4748 / NBRC 13426 / NCIMB 8594 / NRRL 2338).